Here is a 192-residue protein sequence, read N- to C-terminus: Lipid A acyltransferase PagP (192 aa).

The N-terminal stretch at 1 to 29 is a signal peptide; it reads MVVNVVIVAKKYFLFITLLIIQVSLPAHA. Catalysis depends on residues His64, Asp107, and Ser108.

It belongs to the lipid A palmitoyltransferase family. In terms of assembly, homodimer.

It localises to the cell outer membrane. The catalysed reaction is a lipid A + a 1,2-diacyl-sn-glycero-3-phosphocholine = a hepta-acyl lipid A + a 2-acyl-sn-glycero-3-phosphocholine. The enzyme catalyses a lipid IVA + a 1,2-diacyl-sn-glycero-3-phosphocholine = a lipid IVB + a 2-acyl-sn-glycero-3-phosphocholine. It carries out the reaction a lipid IIA + a 1,2-diacyl-sn-glycero-3-phosphocholine = a lipid IIB + a 2-acyl-sn-glycero-3-phosphocholine. Functionally, transfers a fatty acid residue from the sn-1 position of a phospholipid to the N-linked hydroxyfatty acid chain on the proximal unit of lipid A or its precursors. The sequence is that of Lipid A acyltransferase PagP from Citrobacter rodentium (strain ICC168) (Citrobacter freundii biotype 4280).